A 445-amino-acid chain; its full sequence is tRNA modification GTPase MnmE (445 aa).

The (6S)-5-formyl-5,6,7,8-tetrahydrofolate site is built by Arg25, Glu83, and Lys121. Residues 217 to 371 (GVRVVILGPP…LLTLIQEKSR (155 aa)) form the TrmE-type G domain. GTP is bound by residues 227–232 (NAGKST), 246–252 (SEHPGTT), and 271–274 (DTAG). 2 residues coordinate Mg(2+): Ser231 and Thr252. Residue Lys445 participates in (6S)-5-formyl-5,6,7,8-tetrahydrofolate binding.

Belongs to the TRAFAC class TrmE-Era-EngA-EngB-Septin-like GTPase superfamily. TrmE GTPase family. As to quaternary structure, homodimer. Heterotetramer of two MnmE and two MnmG subunits. K(+) is required as a cofactor.

The protein resides in the cytoplasm. Functionally, exhibits a very high intrinsic GTPase hydrolysis rate. Involved in the addition of a carboxymethylaminomethyl (cmnm) group at the wobble position (U34) of certain tRNAs, forming tRNA-cmnm(5)s(2)U34. The protein is tRNA modification GTPase MnmE of Anaplasma phagocytophilum (strain HZ).